Consider the following 37-residue polypeptide: Protease 2 large chain (37 aa).

Positions 1-14 (NDGNGRDSDPHDPG) are enriched in basic and acidic residues. Residues 1–37 (NDGNGRDSDPHDPGDWTTAGQCGLWQPARNSQHWTLV) are disordered. The segment covering 28–37 (ARNSQHWTLV) has biased composition (polar residues).

The protein belongs to the peptidase S8 family. In terms of assembly, heterodimer of a large and a small chain.

The protein localises to the secreted. The chain is Protease 2 large chain from Achromobacter lyticus.